A 521-amino-acid polypeptide reads, in one-letter code: GMP synthase [glutamine-hydrolyzing] (521 aa).

The Glutamine amidotransferase type-1 domain occupies 5–203; sequence KILILDFGSQ…VHEICGCGND (199 aa). The active-site Nucleophile is Cys-82. Catalysis depends on residues His-177 and Glu-179. One can recognise a GMPS ATP-PPase domain in the interval 204 to 396; sequence WNMPDYISEA…LGLPHDMVYR (193 aa). An ATP-binding site is contributed by 231–237; that stretch reads SGGVDSS.

In terms of assembly, homodimer.

It catalyses the reaction XMP + L-glutamine + ATP + H2O = GMP + L-glutamate + AMP + diphosphate + 2 H(+). It functions in the pathway purine metabolism; GMP biosynthesis; GMP from XMP (L-Gln route): step 1/1. Functionally, catalyzes the synthesis of GMP from XMP. The chain is GMP synthase [glutamine-hydrolyzing] from Azoarcus sp. (strain BH72).